Consider the following 131-residue polypeptide: MARVTVEDCIDKVENRFDLVLLASHRARQISQGEQITIDRDNDKNPVVALREIADETLSPGDLKEALIHSLQKHVEVDEPEADLPQIASQAEETPDAELAPEENIAFDRMSEEELLAGIEGLVPPEKNDDF.

It belongs to the RNA polymerase subunit omega family. In terms of assembly, the RNAP catalytic core consists of 2 alpha, 1 beta, 1 beta' and 1 omega subunit. When a sigma factor is associated with the core the holoenzyme is formed, which can initiate transcription.

It carries out the reaction RNA(n) + a ribonucleoside 5'-triphosphate = RNA(n+1) + diphosphate. In terms of biological role, promotes RNA polymerase assembly. Latches the N- and C-terminal regions of the beta' subunit thereby facilitating its interaction with the beta and alpha subunits. This is DNA-directed RNA polymerase subunit omega from Chelativorans sp. (strain BNC1).